The following is a 501-amino-acid chain: Probable malate:quinone oxidoreductase (501 aa).

It belongs to the MQO family. It depends on FAD as a cofactor.

It carries out the reaction (S)-malate + a quinone = a quinol + oxaloacetate. It functions in the pathway carbohydrate metabolism; tricarboxylic acid cycle; oxaloacetate from (S)-malate (quinone route): step 1/1. This Paenarthrobacter aurescens (strain TC1) protein is Probable malate:quinone oxidoreductase.